A 122-amino-acid chain; its full sequence is Protein GL2-INTERACTING REPRESSOR 1 (122 aa).

A compositionally biased stretch (basic and acidic residues) spans 1–10 (MSRRSPKLEL). Residues 1-62 (MSRRSPKLEL…PSVRYSTSPE (62 aa)) are disordered. An EAR motif is present at residues 7–12 (KLELKL). Residues 27 to 46 (SPSRSATTSPTSPPSSCVSS) are compositionally biased toward low complexity. Over residues 47–62 (EMNQDEPSVRYSTSPE) the composition is skewed to polar residues.

As to quaternary structure, interacts with GL2. Interacts with TPL. In terms of tissue distribution, expressed in root and shoot meristems.

It localises to the nucleus. Functionally, acts as a negative regulator of root hair development redundantly with GIR2. GIR1 and GIR2 may function as adapter proteins that associate with GL2 and participate in the control of root hair formation. GIR1 and GIR2 may function as adapter proteins that associate with TPL and participate in the repression of root gene expression. This is Protein GL2-INTERACTING REPRESSOR 1 from Arabidopsis thaliana (Mouse-ear cress).